A 204-amino-acid polypeptide reads, in one-letter code: Pyridoxal 5'-phosphate synthase subunit PdxT (204 aa).

Position 52–54 (52–54) interacts with L-glutamine; it reads GES. The active-site Nucleophile is the C84. L-glutamine contacts are provided by residues R116 and 143-144; that span reads IR. Residues H184 and E186 each act as charge relay system in the active site.

The protein belongs to the glutaminase PdxT/SNO family. In the presence of PdxS, forms a dodecamer of heterodimers. Only shows activity in the heterodimer.

It carries out the reaction aldehydo-D-ribose 5-phosphate + D-glyceraldehyde 3-phosphate + L-glutamine = pyridoxal 5'-phosphate + L-glutamate + phosphate + 3 H2O + H(+). It catalyses the reaction L-glutamine + H2O = L-glutamate + NH4(+). It participates in cofactor biosynthesis; pyridoxal 5'-phosphate biosynthesis. Catalyzes the hydrolysis of glutamine to glutamate and ammonia as part of the biosynthesis of pyridoxal 5'-phosphate. The resulting ammonia molecule is channeled to the active site of PdxS. The protein is Pyridoxal 5'-phosphate synthase subunit PdxT of Pyrobaculum aerophilum (strain ATCC 51768 / DSM 7523 / JCM 9630 / CIP 104966 / NBRC 100827 / IM2).